The primary structure comprises 248 residues: Probable cyclic nucleotide phosphodiesterase CBUA0032 (248 aa).

Fe cation is bound by residues D13, H15, D52, N82, H152, H191, and H193. Residues H15, D52, and 82-83 (NH) contribute to the AMP site. AMP is bound at residue H193.

It belongs to the cyclic nucleotide phosphodiesterase class-III family. It depends on Fe(2+) as a cofactor.

The protein is Probable cyclic nucleotide phosphodiesterase CBUA0032 of Coxiella burnetii (strain RSA 493 / Nine Mile phase I).